A 436-amino-acid chain; its full sequence is Anhydro-N-acetylmuramic acid kinase (436 aa).

An ATP-binding site is contributed by 32-39; it reads GTSLDGMD.

It belongs to the anhydro-N-acetylmuramic acid kinase family.

It catalyses the reaction 1,6-anhydro-N-acetyl-beta-muramate + ATP + H2O = N-acetyl-D-muramate 6-phosphate + ADP + H(+). The protein operates within amino-sugar metabolism; 1,6-anhydro-N-acetylmuramate degradation. Its pathway is cell wall biogenesis; peptidoglycan recycling. Functionally, catalyzes the specific phosphorylation of 1,6-anhydro-N-acetylmuramic acid (anhMurNAc) with the simultaneous cleavage of the 1,6-anhydro ring, generating MurNAc-6-P. Is required for the utilization of anhMurNAc either imported from the medium or derived from its own cell wall murein, and thus plays a role in cell wall recycling. This Psychrobacter arcticus (strain DSM 17307 / VKM B-2377 / 273-4) protein is Anhydro-N-acetylmuramic acid kinase.